The chain runs to 490 residues: Tryptophan decarboxylase (490 aa).

The residue at position 306 (K306) is an N6-(pyridoxal phosphate)lysine.

It belongs to the group II decarboxylase family. In terms of assembly, homodimer. It depends on pyridoxal 5'-phosphate as a cofactor.

Its subcellular location is the cytoplasm. The enzyme catalyses L-tryptophan + H(+) = tryptamine + CO2. Inhibited by (S)-alpha-fluoromethyltryptophan. Functionally, catalyzes the decarboxylation of tryptophan to tryptamine. Tryptamine is a neurotransmitter that induces the release of serotonin, which is suggested to modulate gastrointestinal motility. Therefore, the tryptophan decarboxylase from the gut bacteria Ruminococcus gnavus (strain ATCC 29149 / VPI C7-9) may influence host brain and behavior. Has weak activity with tyrosine and phenylalanine. This Mediterraneibacter gnavus (strain ATCC 29149 / DSM 114966 / JCM 6515 / VPI C7-9) (Ruminococcus gnavus) protein is Tryptophan decarboxylase.